The chain runs to 230 residues: Ubiquitin carboxyl-terminal hydrolase isozyme L3 (230 aa).

In terms of domain architecture, UCH catalytic spans 5–229 (RWLPLEANPE…LRFNAIALSA (225 aa)). The interaction with ubiquitin stretch occupies residues 8-13 (PLEANP). The active-site Nucleophile is Cys95. Ser130 carries the post-translational modification Phosphoserine. The interaction with ubiquitin. Crossover loop which restricts access of large ubiquitin adducts to the active site stretch occupies residues 152–159 (AHEGQTEA). The Proton donor role is filled by His169. Residues 219–224 (ELRFNA) form an interaction with ubiquitin region.

This sequence belongs to the peptidase C12 family. In terms of assembly, preferentially binds diubiquitin; the interaction does not hydrolyze diubiquitin but, in vitro, inhibits the hydrolyzing activity on other substrates. As to expression, highly expressed in heart, skeletal muscle, and testis.

It localises to the cytoplasm. It carries out the reaction Thiol-dependent hydrolysis of ester, thioester, amide, peptide and isopeptide bonds formed by the C-terminal Gly of ubiquitin (a 76-residue protein attached to proteins as an intracellular targeting signal).. With respect to regulation, inhibited by monoubiquitin and diubiquitin. Functionally, deubiquitinating enzyme (DUB) that controls levels of cellular ubiquitin through processing of ubiquitin precursors and ubiquitinated proteins. Thiol protease that recognizes and hydrolyzes a peptide bond at the C-terminal glycine of either ubiquitin or NEDD8. Has a 10-fold preference for Arg and Lys at position P3'', and exhibits a preference towards 'Lys-48'-linked ubiquitin chains. Deubiquitinates ENAC in apical compartments, thereby regulating apical membrane recycling. Indirectly increases the phosphorylation of IGFIR, AKT and FOXO1 and promotes insulin-signaling and insulin-induced adipogenesis. Required for stress-response retinal, skeletal muscle and germ cell maintenance. May be involved in working memory. Can hydrolyze UBB(+1), a mutated form of ubiquitin which is not effectively degraded by the proteasome and is associated with neurogenerative disorders. This is Ubiquitin carboxyl-terminal hydrolase isozyme L3 (UCHL3) from Homo sapiens (Human).